Consider the following 163-residue polypeptide: Inorganic pyrophosphatase (163 aa).

Glu-8 contacts Mg(2+). Substrate is bound by residues Lys-16, Arg-30, and Tyr-42. The Mg(2+) site is built by Asp-52, Asp-57, Asp-84, and Asp-89. Residue Asp-89 is the Proton acceptor of the active site. Tyr-126 is a binding site for substrate.

This sequence belongs to the PPase family. As to quaternary structure, homohexamer. Requires Mg(2+) as cofactor.

The protein localises to the cytoplasm. The catalysed reaction is diphosphate + H2O = 2 phosphate + H(+). Functionally, catalyzes the hydrolysis of inorganic pyrophosphate (PPi) forming two phosphate ions. In Streptomyces coelicolor (strain ATCC BAA-471 / A3(2) / M145), this protein is Inorganic pyrophosphatase.